The chain runs to 306 residues: D-alanine--D-alanine ligase (306 aa).

In terms of domain architecture, ATP-grasp spans 106 to 301; sequence KLLWQSAGIN…FEELVLKILG (196 aa). Residue 132 to 187 coordinates ATP; that stretch reads AKELGLPLIVKPSREGSTIGLSKVREAGEVAAAWHLAARHDAMVLAEQFIEGTELT. The Mg(2+) site is built by Asp255, Glu268, and Asn270.

The protein belongs to the D-alanine--D-alanine ligase family. Mg(2+) serves as cofactor. The cofactor is Mn(2+).

The protein resides in the cytoplasm. It carries out the reaction 2 D-alanine + ATP = D-alanyl-D-alanine + ADP + phosphate + H(+). Its pathway is cell wall biogenesis; peptidoglycan biosynthesis. Its function is as follows. Cell wall formation. The polypeptide is D-alanine--D-alanine ligase (Nitrosospira multiformis (strain ATCC 25196 / NCIMB 11849 / C 71)).